A 203-amino-acid chain; its full sequence is Twist-related protein 1 (203 aa).

Positions 1-18 (MMQDVSSSPVSPADDSLS) are enriched in low complexity. The interval 1 to 105 (MMQDVSSSPV…SGGGSPQSYE (105 aa)) is disordered. Residues 34–43 (RGGRKRRSSR) show a composition bias toward basic residues. Gly residues-rich tracts occupy residues 46-65 (AGGGAGPGGAAGGGVGGGDE) and 80-100 (GCGGGGGSAGGGGGSSSGGGS). In terms of domain architecture, bHLH spans 109 to 160 (TQRVMANVRGRQRTQSLNEAFAALRKIIPTLPSDKLSKIQTLKLAARYIDFL). The segment at 162-192 (QVLQSDELDSKMASCSYVAHERLSYAFSVWR) is sufficient for transactivation activity.

In terms of assembly, efficient DNA binding requires dimerization with another bHLH protein. Homodimer or heterodimer with E proteins such as TCF3. ID1 binds preferentially to TCF3 but does not interact efficiently with TWIST1 so ID1 levels control the amount of TCF3 available to dimerize with TWIST and thus determine the type of dimer formed.

It localises to the nucleus. Functionally, acts as a transcriptional regulator. Inhibits myogenesis by sequestrating E proteins, inhibiting trans-activation by MEF2, and inhibiting DNA-binding by MYOD1 through physical interaction. This interaction probably involves the basic domains of both proteins. Also represses expression of pro-inflammatory cytokines such as TNFA and IL1B. Regulates cranial suture patterning and fusion. Activates transcription as a heterodimer with E proteins. Regulates gene expression differentially, depending on dimer composition. Homodimers induce expression of FGFR2 and POSTN while heterodimers repress FGFR2 and POSTN expression and induce THBS1 expression. Heterodimerization is also required for osteoblast differentiation. Represses the activity of the circadian transcriptional activator: NPAS2-BMAL1 heterodimer. The polypeptide is Twist-related protein 1 (TWIST1) (Callithrix jacchus (White-tufted-ear marmoset)).